Here is a 306-residue protein sequence, read N- to C-terminus: D-alanine--D-alanine ligase (306 aa).

Residues 101-303 enclose the ATP-grasp domain; it reads KYLWQGCGLP…FSQLVARILE (203 aa). 134–189 serves as a coordination point for ATP; sequence IDALGLPLFVKPSREGSSVGISRVNQASELQAALQEAFRFDDEVLVEAFLSGPEYT. Residues Asp-257, Glu-270, and Asn-272 each contribute to the Mg(2+) site.

Belongs to the D-alanine--D-alanine ligase family. Mg(2+) serves as cofactor. Mn(2+) is required as a cofactor.

The protein resides in the cytoplasm. The enzyme catalyses 2 D-alanine + ATP = D-alanyl-D-alanine + ADP + phosphate + H(+). The protein operates within cell wall biogenesis; peptidoglycan biosynthesis. In terms of biological role, cell wall formation. The chain is D-alanine--D-alanine ligase from Erwinia tasmaniensis (strain DSM 17950 / CFBP 7177 / CIP 109463 / NCPPB 4357 / Et1/99).